Reading from the N-terminus, the 374-residue chain is Putative G-protein coupled receptor-like protein B0244.6 (374 aa).

At 1 to 54 (MTQNHYTTSIFANCSKHYEFEILLETCTNSTNPCHAVSQIQSAITIAYVDYYTS) the chain is on the extracellular side. The helical transmembrane segment at 55-75 (VALFSIAALLDIYCLIITIPL) threads the bilayer. The Cytoplasmic segment spans residues 76 to 86 (YRRMKDDSKKK). A helical transmembrane segment spans residues 87-107 (YVFLITRCISGLLLVVAWLLI). Topologically, residues 108–137 (QCIYLRFIAPSQDNLPYYVLALALNIGSTY) are extracellular. A helical transmembrane segment spans residues 138–158 (VLLGSYVGMAGILYLGVLNPI). Residues 159 to 169 (AFNQHLTLRIV) are Cytoplasmic-facing. The chain crosses the membrane as a helical span at residues 170–190 (YIAVCIIFVISIFISIPLAIF). At 191–216 (QALMTVPTSSMSCTDTACAPLITLIN) the chain is on the extracellular side. The chain crosses the membrane as a helical span at residues 217–237 (FVLVFGSLITTTLTLTFVLIS). Residues 238 to 262 (LCRHRKEFKKLDTTSNTSLNSAVRL) lie on the Cytoplasmic side of the membrane. The chain crosses the membrane as a helical span at residues 263–283 (LKFTLFAVLLLVAAEVIPFVI). The Extracellular portion of the chain corresponds to 284–304 (SETKKKHSVVTGCYYFYHSGK). The chain crosses the membrane as a helical span at residues 305-325 (VIQYAVFALTESSIWSIALII). Topologically, residues 326–374 (DPLINIIFDRTVSKKATDQVKWMRKSCVGLVRKVTKRSNPENFTETSEI) are cytoplasmic.

It belongs to the G-protein coupled receptor 1 family. B0244 subfamily.

The protein resides in the cell membrane. In Caenorhabditis elegans, this protein is Putative G-protein coupled receptor-like protein B0244.6.